A 147-amino-acid polypeptide reads, in one-letter code: Hemoglobin subunit epsilon (147 aa).

The Globin domain occupies 3–147 (HLTAEEKAAI…VAIALGHKYH (145 aa)). 2 positions are modified to phosphoserine: S14 and S51. H64 and H93 together coordinate heme b.

Belongs to the globin family. In terms of assembly, heterotetramer of two alpha chains and two epsilon chains in early embryonic hemoglobin Gower-2; two zeta chains and two epsilon chains in early embryonic hemoglobin Gower-1. In terms of tissue distribution, red blood cells.

The epsilon chain is a beta-type chain of early mammalian embryonic hemoglobin. The polypeptide is Hemoglobin subunit epsilon (HBE1) (Ateles belzebuth (White-bellied spider monkey)).